A 444-amino-acid polypeptide reads, in one-letter code: Cell wall mannoprotein PST1 (444 aa).

A signal peptide spans 1 to 19 (MQLHSLIASTALLITSALA). 15 N-linked (GlcNAc...) asparagine glycosylation sites follow: Asn-57, Asn-76, Asn-83, Asn-86, Asn-196, Asn-210, Asn-228, Asn-235, Asn-242, Asn-263, Asn-268, Asn-280, Asn-292, Asn-305, and Asn-329. Composition is skewed to low complexity over residues 359-381 (SVKL…SKSS) and 395-418 (KAAA…SSKG). A disordered region spans residues 359–418 (SVKLSSTSKSQSSQTTAKVSKSSSKAEEKKFTSGDIKAAASASSVSSSGASSSSSKSSKG). Residue Asn-419 is the site of GPI-anchor amidated asparagine attachment. Residues 420-444 (AAIMAPIGQTTPLVGLLTAIIMSIM) constitute a propeptide, removed in mature form.

The protein belongs to the SPS2 family. Extensively N- and O-mannosylated.

The protein resides in the cell membrane. It is found in the secreted. The protein localises to the cell wall. Has a partially redundant function to ECM33 in cell wall integrity. May be involved in a repair mechanism activated in response to cell wall damage. This is Cell wall mannoprotein PST1 (PST1) from Saccharomyces cerevisiae (strain ATCC 204508 / S288c) (Baker's yeast).